The sequence spans 137 residues: Holo-[acyl-carrier-protein] synthase (137 aa).

Residues Asp-8 and Glu-57 each contribute to the Mg(2+) site.

It belongs to the P-Pant transferase superfamily. AcpS family. Requires Mg(2+) as cofactor.

It is found in the cytoplasm. It catalyses the reaction apo-[ACP] + CoA = holo-[ACP] + adenosine 3',5'-bisphosphate + H(+). Transfers the 4'-phosphopantetheine moiety from coenzyme A to a Ser of acyl-carrier-protein. This Cereibacter sphaeroides (strain ATCC 17025 / ATH 2.4.3) (Rhodobacter sphaeroides) protein is Holo-[acyl-carrier-protein] synthase.